Here is a 245-residue protein sequence, read N- to C-terminus: uncharacterized protein (245 aa).

This is an uncharacterized protein from Frog virus 3 (isolate Goorha) (FV-3).